Consider the following 125-residue polypeptide: Holo-[acyl-carrier-protein] synthase (125 aa).

Residues Asp8 and Glu57 each contribute to the Mg(2+) site.

This sequence belongs to the P-Pant transferase superfamily. AcpS family. Mg(2+) serves as cofactor.

It is found in the cytoplasm. The catalysed reaction is apo-[ACP] + CoA = holo-[ACP] + adenosine 3',5'-bisphosphate + H(+). Functionally, transfers the 4'-phosphopantetheine moiety from coenzyme A to a Ser of acyl-carrier-protein. The chain is Holo-[acyl-carrier-protein] synthase from Blochmanniella floridana.